Reading from the N-terminus, the 466-residue chain is Citrate synthase, mitochondrial (466 aa).

Residues 1–27 (MALLTAAARLLGTKNASCLVLAARHAS) constitute a mitochondrion transit peptide. The SIFI-degron signature appears at 2–21 (ALLTAAARLLGTKNASCLVL). An N6-succinyllysine modification is found at Lys-57. Lys-76 carries the post-translational modification N6-acetyllysine; alternate. Lys-76 carries the N6-succinyllysine; alternate modification. Lys-103 and Lys-193 each carry N6-succinyllysine. His-301 is an active-site residue. Residues Lys-321 and Lys-327 each carry the N6-acetyllysine; alternate modification. 2 positions are modified to N6-succinyllysine; alternate: Lys-321 and Lys-327. His-347 is a catalytic residue. Arg-356 contacts oxaloacetate. An N6-acetyllysine; alternate modification is found at Lys-375. The residue at position 375 (Lys-375) is an N6-succinyllysine; alternate. At Lys-382 the chain carries N6-acetyllysine. Lys-393 bears the N6-acetyllysine; alternate mark. Lys-393 carries the post-translational modification N6-succinyllysine; alternate. Lys-395 is modified (N6,N6,N6-trimethyllysine). Asp-402 is a catalytic residue. 2 residues coordinate oxaloacetate: Arg-428 and Arg-448. Lys-450 is modified (N6-succinyllysine). Lys-459 is modified (N6-acetyllysine; alternate). Lys-459 is modified (N6-succinyllysine; alternate).

The protein belongs to the citrate synthase family. In terms of assembly, homodimer. Post-translationally, methylated. Trimethylation at Lys-395 by CSKMT decreases citrate synthase activity. In terms of processing, in response to mitochondrial stress, the precursor protein is ubiquitinated by the SIFI complex in the cytoplasm before mitochondrial import, leading to its degradation. Within the SIFI complex, UBR4 initiates ubiquitin chain that are further elongated or branched by KCMF1.

The protein resides in the mitochondrion matrix. The enzyme catalyses oxaloacetate + acetyl-CoA + H2O = citrate + CoA + H(+). Its pathway is carbohydrate metabolism; tricarboxylic acid cycle; isocitrate from oxaloacetate: step 1/2. Key enzyme of the Krebs tricarboxylic acid cycle which catalyzes the synthesis of citrate from acetyl coenzyme A and oxaloacetate. This is Citrate synthase, mitochondrial (CS) from Macaca fascicularis (Crab-eating macaque).